Reading from the N-terminus, the 267-residue chain is 4-hydroxy-tetrahydrodipicolinate reductase (267 aa).

Residues 12–17 (GARGRM), Asp-38, 100–102 (GTT), and 126–129 (APNF) contribute to the NAD(+) site. Catalysis depends on His-156, which acts as the Proton donor/acceptor. His-157 contacts (S)-2,3,4,5-tetrahydrodipicolinate. Lys-160 serves as the catalytic Proton donor. 166–167 (GT) contacts (S)-2,3,4,5-tetrahydrodipicolinate.

Belongs to the DapB family.

The protein resides in the cytoplasm. It catalyses the reaction (S)-2,3,4,5-tetrahydrodipicolinate + NAD(+) + H2O = (2S,4S)-4-hydroxy-2,3,4,5-tetrahydrodipicolinate + NADH + H(+). The enzyme catalyses (S)-2,3,4,5-tetrahydrodipicolinate + NADP(+) + H2O = (2S,4S)-4-hydroxy-2,3,4,5-tetrahydrodipicolinate + NADPH + H(+). The protein operates within amino-acid biosynthesis; L-lysine biosynthesis via DAP pathway; (S)-tetrahydrodipicolinate from L-aspartate: step 4/4. Functionally, catalyzes the conversion of 4-hydroxy-tetrahydrodipicolinate (HTPA) to tetrahydrodipicolinate. The sequence is that of 4-hydroxy-tetrahydrodipicolinate reductase from Bacillus pumilus (strain SAFR-032).